A 461-amino-acid polypeptide reads, in one-letter code: Probable outer membrane lipoprotein SilC (461 aa).

A signal peptide spans 1-17 (MFKLKLLSISTIFILAG). A lipid anchor (N-palmitoyl cysteine) is attached at Cys18. A lipid anchor (S-diacylglycerol cysteine) is attached at Cys18.

Belongs to the outer membrane factor (OMF) (TC 1.B.17) family.

The protein resides in the cell outer membrane. Its function is as follows. Component of the sil cation-efflux system that confers resistance to silver. May be part of a three-component cation/proton antiporter. This chain is Probable outer membrane lipoprotein SilC (silC), found in Salmonella typhimurium.